The primary structure comprises 398 residues: Ribosomal RNA large subunit methyltransferase F (398 aa).

The segment covering 1–12 (MTPSRKPARPGA) has biased composition (basic residues). The segment at 1–85 (MTPSRKPARP…RNLHGQGYDF (85 aa)) is disordered. 2 stretches are compositionally biased toward low complexity: residues 20–40 (PSAK…AQPK) and 48–59 (QAKSQAKPQAKS).

This sequence belongs to the methyltransferase superfamily. METTL16/RlmF family.

The protein resides in the cytoplasm. The enzyme catalyses adenosine(1618) in 23S rRNA + S-adenosyl-L-methionine = N(6)-methyladenosine(1618) in 23S rRNA + S-adenosyl-L-homocysteine + H(+). Its function is as follows. Specifically methylates the adenine in position 1618 of 23S rRNA. The sequence is that of Ribosomal RNA large subunit methyltransferase F from Shewanella loihica (strain ATCC BAA-1088 / PV-4).